Here is a 411-residue protein sequence, read N- to C-terminus: RNA binding protein fox-1 homolog 2 (411 aa).

Residues 16–175 (TRGTKRESDQ…SETKASPKRL (160 aa)) form a disordered region. Polar residues-rich tracts occupy residues 58 to 83 (PVSQ…TPDT) and 99 to 119 (NGLS…QSTE). Residues 135–165 (SAPATSTANASSTTDGSQTEGQQSQSQNNEN) are compositionally biased toward low complexity. Residues 173 to 249 (KRLHVSNIPF…RKIEVNNATA (77 aa)) enclose the RRM domain.

In terms of assembly, interacts with papd4/gld2.

The protein resides in the nucleus. It localises to the cytoplasm. Functionally, RNA-binding protein that regulates alternative splicing events by binding to 5'-UGCAUGU-3' elements. Regulates alternative splicing of tissue-specific exons. The polypeptide is RNA binding protein fox-1 homolog 2 (rbfox2) (Xenopus laevis (African clawed frog)).